Here is a 93-residue protein sequence, read N- to C-terminus: Exodeoxyribonuclease 7 small subunit (93 aa).

Basic and acidic residues predominate over residues 61–75 (IDDNGDEKVYEKQTD). The interval 61 to 93 (IDDNGDEKVYEKQTDDPSNNGGGNRGFGSADEQ) is disordered.

The protein belongs to the XseB family. As to quaternary structure, heterooligomer composed of large and small subunits.

Its subcellular location is the cytoplasm. It carries out the reaction Exonucleolytic cleavage in either 5'- to 3'- or 3'- to 5'-direction to yield nucleoside 5'-phosphates.. Its function is as follows. Bidirectionally degrades single-stranded DNA into large acid-insoluble oligonucleotides, which are then degraded further into small acid-soluble oligonucleotides. The polypeptide is Exodeoxyribonuclease 7 small subunit (Limosilactobacillus reuteri (strain DSM 20016) (Lactobacillus reuteri)).